The sequence spans 282 residues: MKFSKVASFAFLALSSQAALIQHDVIIENIKRDAVLAGSAENNIASSAFTKRESEVDSSEDVQLEKRISFAGIVSSIINQLPSIIQIIGNIIKAGLVKRDDIDDAFALVLAEYPHIVSVFEDAFGDFTEAKRDEAASVGTQILGSFPSILTQVVNGFSKVLDFANSDTFSTGLSILSNFTSIASSFASSLSSVVQNGKRDGVEDIVSMVVRQIPDLIVEASTPFVTNAEKMKRDADVAASLVDNLVKKGLSTAIDTFGAATVASVVSKRQVSSFLSKVLSKA.

Residues 1-18 (MKFSKVASFAFLALSSQA) form the signal peptide. A helical membrane pass occupies residues 68 to 92 (ISFAGIVSSIINQLPSIIQIIGNII).

It is found in the secreted. The protein localises to the host cell membrane. Secreted protein cleaved by KEX2 in 8 similar peptides (ECE1-I to ECE1-VIII). Stimulates biofilm formation. In terms of biological role, acts as a cytolytic peptide toxin that directly damages host epithelial membranes, triggers a danger response signaling pathway and activates epithelial immunity. Probably acts similarly to cationic antimicrobial peptide toxins, inducing lesions after binding to target cell membranes and causing an inward current associated with calcium influx. This Candida tropicalis (strain ATCC MYA-3404 / T1) (Yeast) protein is Extent of cell elongation protein 1.